We begin with the raw amino-acid sequence, 1135 residues long: APC membrane recruitment protein 1 (1135 aa).

Met-1 carries the N-acetylmethionine modification. Disordered stretches follow at residues 1 to 115, 156 to 308, 339 to 405, 447 to 484, 736 to 764, 921 to 948, and 1007 to 1135; these read METQ…EGTG, AEKF…VGDP, SMTD…EDDD, GLAPGELLTPQSDQQESAPNSDEGYYDSTTPGFEDDSG, NFGGSPRRAYPTYSPPEDPEEEEVEKEGN, LQAQQEDSDEEDEEEEEGEWSRDSPLSL, and VPES…NLAK. The span at 10-19 shows a compositional bias: low complexity; it reads QAKGAAASGS. Residues 23 to 35 show a composition bias toward basic and acidic residues; the sequence is QTAEKGAKNKAAE. Over residues 36 to 50 the composition is skewed to low complexity; sequence ATEGPTSEPSSSGPG. Residues 73–83 show a composition bias toward gly residues; that stretch reads FGGGRSKGSGK. Basic and acidic residues-rich tracts occupy residues 94-107 and 196-208; these read KTHDGLSEAAHGPE and GPERVRARPHEHV. The segment covering 238–248 has biased composition (pro residues); the sequence is KVSPTPEPSPP. Position 246 is a phosphoserine (Ser-246). Composition is skewed to basic and acidic residues over residues 253–262 and 282–291; these read MACKDPEKPM and EEPHSPETGE. Residues 373–405 show a composition bias toward acidic residues; sequence ALPDDDDEEEEEEEEVELEEEEEEVKEEEEDDD. Residues 455-466 are compositionally biased toward polar residues; it reads TPQSDQQESAPN. Positions 926 to 938 are enriched in acidic residues; it reads EDSDEEDEEEEEG. The segment covering 1058–1069 has biased composition (low complexity); the sequence is PSCSSSSGGFSP. A compositionally biased stretch (polar residues) spans 1119–1135; it reads SLATSYSSTAMNGNLAK.

This sequence belongs to the Amer family. In terms of assembly, interacts with CTNNB1, AXIN1, LRP6, KEAP1, APC and BTRC. Interacts with SCF (SKP1-CUL1-F-box protein) E3 ubiquitin-protein ligase complexes containing BTRC and/or FBXW11. Identified in the beta-catenin destruction complex containing CTNNB1, APC, AXIN1 and AXIN2. Interacts with WT1. In terms of tissue distribution, detected in fetal and adult kidney, brain and spleen.

It localises to the cytoplasm. It is found in the cell membrane. Its subcellular location is the nucleus. Regulator of the canonical Wnt signaling pathway. Acts by specifically binding phosphatidylinositol 4,5-bisphosphate (PtdIns(4,5)P2), translocating to the cell membrane and interacting with key regulators of the canonical Wnt signaling pathway, such as components of the beta-catenin destruction complex. Acts both as a positive and negative regulator of the Wnt signaling pathway, depending on the context: acts as a positive regulator by promoting LRP6 phosphorylation. Also acts as a negative regulator by acting as a scaffold protein for the beta-catenin destruction complex and promoting stabilization of Axin at the cell membrane. Promotes CTNNB1 ubiquitination and degradation. Involved in kidney development. The protein is APC membrane recruitment protein 1 (AMER1) of Homo sapiens (Human).